The primary structure comprises 204 residues: Prephenate decarboxylase (204 aa).

This sequence belongs to the prephenate decarboxylase family.

The protein resides in the cytoplasm. It catalyses the reaction prephenate + H(+) = 3-[(4R)-4-hydroxycyclohexa-1,5-dien-1-yl]-2-oxopropanoate + CO2. It participates in antibiotic biosynthesis; bacilysin biosynthesis. Functionally, part of the bacABCDEF operon responsible for the biosynthesis of the nonribosomally synthesized dipeptide antibiotic bacilysin, composed of L-alanine and L-anticapsin. Bacilysin is an irreversible inactivator of the glutaminase domain of glucosamine synthetase. BacA is an unusual prephenate decarboxylase that avoids the typical aromatization of the cyclohexadienol ring of prephenate. BacA catalyzes the protonation of prephenate (1-carboxy-4-hydroxy-alpha-oxo-2,5-cyclohexadiene-1-propanoic acid) at C6 position, followed by a decarboxylation to produce the endocyclic-delta(4),delta(8)-7R-dihydro-hydroxyphenylpyruvate (en-H2HPP). En-H2HPP is able to undergo a slow nonenzymatic isomerization to produce the exocyclic-delta(3),delta(5)-dihydro-hydroxyphenylpyruvate (ex-H2HPP). BacA isomerizes only the pro-R double bond in prephenate. The chain is Prephenate decarboxylase from Bacillus subtilis.